Consider the following 92-residue polypeptide: Endoribonuclease VapD homolog (92 aa).

It belongs to the VapD ribonuclease family. As to quaternary structure, homodimer.

Its function is as follows. Cleaves ssRNA, mostly between U:A. This Neisseria gonorrhoeae protein is Endoribonuclease VapD homolog.